The sequence spans 495 residues: GTPase Der (495 aa).

2 EngA-type G domains span residues 3 to 166 (PVIA…MDAE) and 208 to 381 (IKLA…DCST). Residues 9 to 16 (GRPNVGKS), 56 to 60 (DTGGI), 118 to 121 (NKTD), 214 to 221 (GRPNVGKS), 261 to 265 (DTAGV), and 326 to 329 (NKWD) each bind GTP. In terms of domain architecture, KH-like spans 382–466 (KRVGTSLLTR…PIRIQFKEGE (85 aa)).

This sequence belongs to the TRAFAC class TrmE-Era-EngA-EngB-Septin-like GTPase superfamily. EngA (Der) GTPase family. In terms of assembly, associates with the 50S ribosomal subunit.

GTPase that plays an essential role in the late steps of ribosome biogenesis. The chain is GTPase Der from Yersinia pseudotuberculosis serotype IB (strain PB1/+).